A 392-amino-acid polypeptide reads, in one-letter code: Phosphopentomutase (392 aa).

The Mn(2+) site is built by D15, D287, H292, D328, H329, and H340.

It belongs to the phosphopentomutase family. Mn(2+) is required as a cofactor.

Its subcellular location is the cytoplasm. The enzyme catalyses 2-deoxy-alpha-D-ribose 1-phosphate = 2-deoxy-D-ribose 5-phosphate. The catalysed reaction is alpha-D-ribose 1-phosphate = D-ribose 5-phosphate. The protein operates within carbohydrate degradation; 2-deoxy-D-ribose 1-phosphate degradation; D-glyceraldehyde 3-phosphate and acetaldehyde from 2-deoxy-alpha-D-ribose 1-phosphate: step 1/2. Its function is as follows. Isomerase that catalyzes the conversion of deoxy-ribose 1-phosphate (dRib-1-P) and ribose 1-phosphate (Rib-1-P) to deoxy-ribose 5-phosphate (dRib-5-P) and ribose 5-phosphate (Rib-5-P), respectively. This is Phosphopentomutase from Syntrophotalea carbinolica (strain DSM 2380 / NBRC 103641 / GraBd1) (Pelobacter carbinolicus).